Reading from the N-terminus, the 260-residue chain is Ribonuclease PH (260 aa).

Residues Arg-88 and 126-128 (GTR) contribute to the phosphate site.

This sequence belongs to the RNase PH family. As to quaternary structure, homohexameric ring arranged as a trimer of dimers.

The enzyme catalyses tRNA(n+1) + phosphate = tRNA(n) + a ribonucleoside 5'-diphosphate. In terms of biological role, phosphorolytic 3'-5' exoribonuclease that plays an important role in tRNA 3'-end maturation. Removes nucleotide residues following the 3'-CCA terminus of tRNAs; can also add nucleotides to the ends of RNA molecules by using nucleoside diphosphates as substrates, but this may not be physiologically important. Probably plays a role in initiation of 16S rRNA degradation (leading to ribosome degradation) during starvation. This Mycobacterium sp. (strain JLS) protein is Ribonuclease PH.